The following is a 226-amino-acid chain: Glutathione peroxidase 3 (226 aa).

An N-terminal signal peptide occupies residues 1–24 (MARLFRASCLLSLLLAGFIPPSQG). Sec-73 is a catalytic residue. Sec-73 is a non-standard amino acid (selenocysteine).

It belongs to the glutathione peroxidase family. Homotetramer. As to expression, secreted in plasma.

It is found in the secreted. It carries out the reaction 2 glutathione + H2O2 = glutathione disulfide + 2 H2O. It catalyses the reaction tert-butyl hydroperoxide + 2 glutathione = tert-butanol + glutathione disulfide + H2O. In terms of biological role, protects cells and enzymes from oxidative damage, by catalyzing the reduction of hydrogen peroxide, lipid peroxides and organic hydroperoxide, by glutathione. This is Glutathione peroxidase 3 from Bos taurus (Bovine).